The sequence spans 333 residues: DNA-directed RNA polymerase subunit alpha (333 aa).

Residues 1–239 form an alpha N-terminal domain (alpha-NTD) region; it reads MSAVLDKGSL…TQARCFLNIA (239 aa). The tract at residues 259 to 333 is alpha C-terminal domain (alpha-CTD); that stretch reads DASDLLSARI…SLGMNLDSHG (75 aa).

This sequence belongs to the RNA polymerase alpha chain family. As to quaternary structure, homodimer. The RNAP catalytic core consists of 2 alpha, 1 beta, 1 beta' and 1 omega subunit. When a sigma factor is associated with the core the holoenzyme is formed, which can initiate transcription.

The enzyme catalyses RNA(n) + a ribonucleoside 5'-triphosphate = RNA(n+1) + diphosphate. Its function is as follows. DNA-dependent RNA polymerase catalyzes the transcription of DNA into RNA using the four ribonucleoside triphosphates as substrates. This Neorickettsia sennetsu (strain ATCC VR-367 / Miyayama) (Ehrlichia sennetsu) protein is DNA-directed RNA polymerase subunit alpha.